We begin with the raw amino-acid sequence, 141 residues long: Hemoglobin subunit alpha (141 aa).

One can recognise a Globin domain in the interval 1 to 141 (VLSPADKSNV…VSTVLTSKYR (141 aa)). The residue at position 3 (S3) is a Phosphoserine. N6-succinyllysine is present on residues K7 and K11. K16 is modified (N6-acetyllysine; alternate). Position 16 is an N6-succinyllysine; alternate (K16). The residue at position 24 (Y24) is a Phosphotyrosine. S35 carries the phosphoserine modification. K40 is subject to N6-succinyllysine. Residue S49 is modified to Phosphoserine. H58 contributes to the O2 binding site. Position 87 (H87) interacts with heme b. S102 is modified (phosphoserine). T108 is modified (phosphothreonine). 2 positions are modified to phosphoserine: S124 and S131. Phosphothreonine occurs at positions 134 and 137. S138 is modified (phosphoserine).

The protein belongs to the globin family. In terms of assembly, heterotetramer of two alpha chains and two beta chains. In terms of tissue distribution, red blood cells.

Its function is as follows. Involved in oxygen transport from the lung to the various peripheral tissues. Functionally, hemopressin acts as an antagonist peptide of the cannabinoid receptor CNR1. Hemopressin-binding efficiently blocks cannabinoid receptor CNR1 and subsequent signaling. This chain is Hemoglobin subunit alpha (HBA), found in Mico argentatus (Silvery marmoset).